The sequence spans 163 residues: Type-2 ice-structuring protein (163 aa).

An N-terminal signal peptide occupies residues M1–A17. The propeptide occupies N18 to S34. In terms of domain architecture, C-type lectin spans P39–F163. 5 disulfides stabilise this stretch: C41–C52, C69–C159, C103–C134, C123–C145, and C135–C151.

Post-translationally, the N-terminus is blocked.

Its subcellular location is the secreted. Functionally, antifreeze proteins lower the blood freezing point. This Hemitripterus americanus (Sea raven) protein is Type-2 ice-structuring protein.